We begin with the raw amino-acid sequence, 492 residues long: Ribulose bisphosphate carboxylase large chain (492 aa).

Residues N131 and T181 each contribute to the substrate site. K183 acts as the Proton acceptor in catalysis. A substrate-binding site is contributed by K185. Mg(2+)-binding residues include K209, D211, and E212. At K209 the chain carries N6-carboxylysine. H301 acts as the Proton acceptor in catalysis. R302, H334, and S386 together coordinate substrate.

This sequence belongs to the RuBisCO large chain family. Type I subfamily. Heterohexadecamer of 8 large chains and 8 small chains. It depends on Mg(2+) as a cofactor.

The enzyme catalyses 2 (2R)-3-phosphoglycerate + 2 H(+) = D-ribulose 1,5-bisphosphate + CO2 + H2O. It carries out the reaction D-ribulose 1,5-bisphosphate + O2 = 2-phosphoglycolate + (2R)-3-phosphoglycerate + 2 H(+). Its function is as follows. RuBisCO catalyzes two reactions: the carboxylation of D-ribulose 1,5-bisphosphate, the primary event in carbon dioxide fixation, as well as the oxidative fragmentation of the pentose substrate. Both reactions occur simultaneously and in competition at the same active site. In Nitrosococcus oceani (strain ATCC 19707 / BCRC 17464 / JCM 30415 / NCIMB 11848 / C-107), this protein is Ribulose bisphosphate carboxylase large chain.